A 142-amino-acid chain; its full sequence is Protein spalt-accessory (142 aa).

Residues 1-16 form the signal peptide; that stretch reads MKLLIALFALVTAVNA. Residues 75–142 form a disordered region; that stretch reads GFAGQGSPNQ…HHEHHGHHRH (68 aa). Positions 107 to 124 are enriched in basic and acidic residues; sequence GHFHENPHEYPEHHGDHH. Over residues 125–142 the composition is skewed to basic residues; that stretch reads REHHEHHGHHEHHGHHRH.

It localises to the secreted. Likely to be involved in the establishment of the head. The protein is Protein spalt-accessory (sala) of Drosophila melanogaster (Fruit fly).